The primary structure comprises 88 residues: Cell division topological specificity factor (88 aa).

It belongs to the MinE family.

Its function is as follows. Prevents the cell division inhibition by proteins MinC and MinD at internal division sites while permitting inhibition at polar sites. This ensures cell division at the proper site by restricting the formation of a division septum at the midpoint of the long axis of the cell. This chain is Cell division topological specificity factor, found in Escherichia fergusonii (strain ATCC 35469 / DSM 13698 / CCUG 18766 / IAM 14443 / JCM 21226 / LMG 7866 / NBRC 102419 / NCTC 12128 / CDC 0568-73).